Here is a 345-residue protein sequence, read N- to C-terminus: uncharacterized protein (345 aa).

It belongs to the methyltransferase superfamily.

This is an uncharacterized protein from Streptomyces fradiae (Streptomyces roseoflavus).